A 270-amino-acid polypeptide reads, in one-letter code: Phosphatidylglycerol--prolipoprotein diacylglyceryl transferase (270 aa).

The next 7 membrane-spanning stretches (helical) occupy residues 10–30, 56–76, 92–112, 120–140, 175–195, 202–222, and 237–257; these read VAVA…LVGI, LIFW…VLFY, WKGG…AWWF, FFQL…AGRI, SQLY…NLYA, MAVS…VEFV, and VTMG…LIWL. Arginine 139 provides a ligand contact to a 1,2-diacyl-sn-glycero-3-phospho-(1'-sn-glycerol).

The protein belongs to the Lgt family.

The protein localises to the cell inner membrane. The catalysed reaction is L-cysteinyl-[prolipoprotein] + a 1,2-diacyl-sn-glycero-3-phospho-(1'-sn-glycerol) = an S-1,2-diacyl-sn-glyceryl-L-cysteinyl-[prolipoprotein] + sn-glycerol 1-phosphate + H(+). Its pathway is protein modification; lipoprotein biosynthesis (diacylglyceryl transfer). Its function is as follows. Catalyzes the transfer of the diacylglyceryl group from phosphatidylglycerol to the sulfhydryl group of the N-terminal cysteine of a prolipoprotein, the first step in the formation of mature lipoproteins. This Pseudomonas savastanoi pv. phaseolicola (strain 1448A / Race 6) (Pseudomonas syringae pv. phaseolicola (strain 1448A / Race 6)) protein is Phosphatidylglycerol--prolipoprotein diacylglyceryl transferase.